A 309-amino-acid polypeptide reads, in one-letter code: Ribonuclease Z (309 aa).

Zn(2+) contacts are provided by His-63, His-65, Asp-67, His-68, His-141, Asp-212, and His-270. Residue Asp-67 is the Proton acceptor of the active site.

Belongs to the RNase Z family. In terms of assembly, homodimer. Requires Zn(2+) as cofactor.

The catalysed reaction is Endonucleolytic cleavage of RNA, removing extra 3' nucleotides from tRNA precursor, generating 3' termini of tRNAs. A 3'-hydroxy group is left at the tRNA terminus and a 5'-phosphoryl group is left at the trailer molecule.. In terms of biological role, zinc phosphodiesterase, which displays some tRNA 3'-processing endonuclease activity. Probably involved in tRNA maturation, by removing a 3'-trailer from precursor tRNA. This is Ribonuclease Z from Limosilactobacillus reuteri (strain DSM 20016) (Lactobacillus reuteri).